We begin with the raw amino-acid sequence, 140 residues long: Large ribosomal subunit protein uL15 (140 aa).

Residues 1–32 form a disordered region; the sequence is MDTKKFRGSRTCGGGTHKNRRGAGNRGGRGKA.

It belongs to the universal ribosomal protein uL15 family. In terms of assembly, part of the 50S ribosomal subunit.

Binds to the 23S rRNA. This is Large ribosomal subunit protein uL15 from Methanosarcina acetivorans (strain ATCC 35395 / DSM 2834 / JCM 12185 / C2A).